We begin with the raw amino-acid sequence, 41 residues long: CGGVDAPCDKDRPDCCSYAECLKPAGYGWWHGTYYCYRKKE.

3 cysteine pairs are disulfide-bonded: cysteine 1–cysteine 16, cysteine 8–cysteine 21, and cysteine 15–cysteine 36.

The protein belongs to the neurotoxin 14 (magi-1) family. 08 (Ltx-4) subfamily. In terms of tissue distribution, expressed by the venom gland.

The protein resides in the secreted. In terms of biological role, toxin that causes irreversible contractile paralysis in adult Aedes aegypti resulting in 100% mortality after 24 hours. The polypeptide is U-theraphotoxin-Lk1a (Lasiodora klugi (Bahia scarlet tarantula)).